Reading from the N-terminus, the 285-residue chain is Alginate lyase (285 aa).

Residues 1–20 (MIKSNLVISSLAIVSSMSYA) form the signal peptide.

This sequence belongs to the polysaccharide lyase 6 family.

The catalysed reaction is Eliminative cleavage of alginate to give oligosaccharides with 4-deoxy-alpha-L-erythro-hex-4-enuronosyl groups at their non-reducing ends and beta-D-mannuronate at their reducing end.. This is Alginate lyase (alxM) from Photobacterium sp. (strain ATCC 43367).